The primary structure comprises 243 residues: UPF0173 metal-dependent hydrolase Xaut_3786 (243 aa).

The protein belongs to the UPF0173 family.

This is UPF0173 metal-dependent hydrolase Xaut_3786 from Xanthobacter autotrophicus (strain ATCC BAA-1158 / Py2).